An 89-amino-acid polypeptide reads, in one-letter code: Small ribosomal subunit protein uS15 (89 aa).

It belongs to the universal ribosomal protein uS15 family. Part of the 30S ribosomal subunit. Forms a bridge to the 50S subunit in the 70S ribosome, contacting the 23S rRNA.

One of the primary rRNA binding proteins, it binds directly to 16S rRNA where it helps nucleate assembly of the platform of the 30S subunit by binding and bridging several RNA helices of the 16S rRNA. Functionally, forms an intersubunit bridge (bridge B4) with the 23S rRNA of the 50S subunit in the ribosome. This is Small ribosomal subunit protein uS15 from Bartonella bacilliformis (strain ATCC 35685 / KC583 / Herrer 020/F12,63).